The chain runs to 485 residues: Isocitrate dehydrogenase [NADP], chloroplastic/mitochondrial (485 aa).

The N-terminal 65 residues, 1-65, are a transit peptide targeting the chloroplast and mitochondrion; sequence MLNKLTHGVF…VQFHRASAVR (65 aa). NADP(+)-binding positions include 147–149 and R154; that span reads TIT. T149 contributes to the substrate binding site. Residues 166–172, R181, and R204 contribute to the substrate site; that span reads SPNGTIR. D323 provides a ligand contact to Mn(2+). Residue K331 participates in NADP(+) binding. D346 is a Mn(2+) binding site. Residues 381-386 and N399 each bind NADP(+); that span reads GTVTRH.

Belongs to the isocitrate and isopropylmalate dehydrogenases family. Mg(2+) serves as cofactor. It depends on Mn(2+) as a cofactor.

Its subcellular location is the plastid. The protein localises to the chloroplast. It localises to the mitochondrion. It carries out the reaction D-threo-isocitrate + NADP(+) = 2-oxoglutarate + CO2 + NADPH. May be involved in response to oxidative stresses. In Arabidopsis thaliana (Mouse-ear cress), this protein is Isocitrate dehydrogenase [NADP], chloroplastic/mitochondrial.